A 251-amino-acid chain; its full sequence is Triosephosphate isomerase (251 aa).

9–11 (NWK) provides a ligand contact to substrate. The Electrophile role is filled by His96. The Proton acceptor role is filled by Glu166. Substrate contacts are provided by residues Gly172, Ser212, and 233-234 (GG).

This sequence belongs to the triosephosphate isomerase family. As to quaternary structure, homodimer.

Its subcellular location is the cytoplasm. It carries out the reaction D-glyceraldehyde 3-phosphate = dihydroxyacetone phosphate. Its pathway is carbohydrate biosynthesis; gluconeogenesis. It functions in the pathway carbohydrate degradation; glycolysis; D-glyceraldehyde 3-phosphate from glycerone phosphate: step 1/1. Functionally, involved in the gluconeogenesis. Catalyzes stereospecifically the conversion of dihydroxyacetone phosphate (DHAP) to D-glyceraldehyde-3-phosphate (G3P). The protein is Triosephosphate isomerase of Pelodictyon phaeoclathratiforme (strain DSM 5477 / BU-1).